We begin with the raw amino-acid sequence, 116 residues long: Non-specific lipid-transfer protein 5 (116 aa).

An N-terminal signal peptide occupies residues 1–24 (MARSMKLACVVLVMCMIVAPMAEG). 4 disulfides stabilise this stretch: Cys28–Cys75, Cys38–Cys52, Cys53–Cys98, and Cys73–Cys112.

It belongs to the plant LTP family.

In terms of biological role, plant non-specific lipid-transfer proteins transfer phospholipids as well as galactolipids across membranes. May play a role in wax or cutin deposition in the cell walls of expanding epidermal cells and certain secretory tissues. The protein is Non-specific lipid-transfer protein 5 of Lens culinaris (Lentil).